The sequence spans 154 residues: Aspartate 1-decarboxylase 1 (154 aa).

Residue Ser26 is the Schiff-base intermediate with substrate; via pyruvic acid of the active site. At Ser26 the chain carries Pyruvic acid (Ser). Residue Thr58 participates in substrate binding. Residue Tyr59 is the Proton donor of the active site. A substrate-binding site is contributed by 74–76 (GAA). The disordered stretch occupies residues 129–154 (VGLVRGDTNSPQPSLSEQAGDPRRAQ). Over residues 135-145 (DTNSPQPSLSE) the composition is skewed to polar residues.

This sequence belongs to the PanD family. Heterooctamer of four alpha and four beta subunits. Requires pyruvate as cofactor. Post-translationally, is synthesized initially as an inactive proenzyme, which is activated by self-cleavage at a specific serine bond to produce a beta-subunit with a hydroxyl group at its C-terminus and an alpha-subunit with a pyruvoyl group at its N-terminus.

The protein localises to the cytoplasm. It catalyses the reaction L-aspartate + H(+) = beta-alanine + CO2. Its pathway is cofactor biosynthesis; (R)-pantothenate biosynthesis; beta-alanine from L-aspartate: step 1/1. Functionally, catalyzes the pyruvoyl-dependent decarboxylation of aspartate to produce beta-alanine. The chain is Aspartate 1-decarboxylase 1 from Frankia casuarinae (strain DSM 45818 / CECT 9043 / HFP020203 / CcI3).